The chain runs to 283 residues: ATP phosphoribosyltransferase (283 aa).

This sequence belongs to the ATP phosphoribosyltransferase family. Long subfamily. It depends on Mg(2+) as a cofactor.

It localises to the cytoplasm. It carries out the reaction 1-(5-phospho-beta-D-ribosyl)-ATP + diphosphate = 5-phospho-alpha-D-ribose 1-diphosphate + ATP. It participates in amino-acid biosynthesis; L-histidine biosynthesis; L-histidine from 5-phospho-alpha-D-ribose 1-diphosphate: step 1/9. With respect to regulation, feedback inhibited by histidine. Its function is as follows. Catalyzes the condensation of ATP and 5-phosphoribose 1-diphosphate to form N'-(5'-phosphoribosyl)-ATP (PR-ATP). Has a crucial role in the pathway because the rate of histidine biosynthesis seems to be controlled primarily by regulation of HisG enzymatic activity. In Rhodococcus erythropolis (strain PR4 / NBRC 100887), this protein is ATP phosphoribosyltransferase.